Consider the following 259-residue polypeptide: Ribonuclease PH (259 aa).

Residues Arg-88 and 126-128 contribute to the phosphate site; that span reads GTR.

It belongs to the RNase PH family. As to quaternary structure, homohexameric ring arranged as a trimer of dimers.

The enzyme catalyses tRNA(n+1) + phosphate = tRNA(n) + a ribonucleoside 5'-diphosphate. Phosphorolytic 3'-5' exoribonuclease that plays an important role in tRNA 3'-end maturation. Removes nucleotide residues following the 3'-CCA terminus of tRNAs; can also add nucleotides to the ends of RNA molecules by using nucleoside diphosphates as substrates, but this may not be physiologically important. Probably plays a role in initiation of 16S rRNA degradation (leading to ribosome degradation) during starvation. The sequence is that of Ribonuclease PH from Mycobacterium bovis (strain BCG / Pasteur 1173P2).